A 289-amino-acid polypeptide reads, in one-letter code: Purine nucleoside phosphorylase (289 aa).

Position 1 is an N-acetylmethionine (Met-1). Phosphate-binding positions include Ser-33, His-64, and 84–86; that span reads RFH. Residue Tyr-88 participates in a purine D-ribonucleoside binding. Ala-116 lines the phosphate pocket. The a purine D-ribonucleoside site is built by Glu-201 and Met-219. Phosphate is bound at residue Ser-220. A purine D-ribonucleoside is bound by residues Asn-243 and His-257.

Belongs to the PNP/MTAP phosphorylase family. In terms of assembly, homotrimer.

It is found in the cytoplasm. It carries out the reaction inosine + phosphate = alpha-D-ribose 1-phosphate + hypoxanthine. The catalysed reaction is guanosine + phosphate = alpha-D-ribose 1-phosphate + guanine. It catalyses the reaction 2'-deoxyguanosine + phosphate = 2-deoxy-alpha-D-ribose 1-phosphate + guanine. The enzyme catalyses 2'-deoxyinosine + phosphate = 2-deoxy-alpha-D-ribose 1-phosphate + hypoxanthine. It functions in the pathway purine metabolism; purine nucleoside salvage. Catalyzes the phosphorolytic breakdown of the N-glycosidic bond in the beta-(deoxy)ribonucleoside molecules, with the formation of the corresponding free purine bases and pentose-1-phosphate. Preferentially acts on 6-oxopurine nucleosides including inosine and guanosine. The polypeptide is Purine nucleoside phosphorylase (Pnp) (Rattus norvegicus (Rat)).